A 584-amino-acid chain; its full sequence is MAEFILNAADFGVPRDGKTDSTERINQCLSTAVSKGYHTVWFPKGTYLIDATLGGDLNQRFRNAGIIVPGNLEIMMDPECIMKVIPNSSWGYSAFYVGKQENITISGGQIIGERDEHTYASAGIRSTHEWGFGICIEGCSNVVIDDVKISDFTGDGIIVSPRGLKTNQDYRTSEQIIIRRCEVRRSRRNNISITGCDMVTVEECLIEDAGTGNGTAPKFGIDIEGYGEGDVDYEEPINVSIRNNHFVGNVSSSVTNFNGYGILIEGNHSDNTISYGYGTQTVIKGNILRRPEDAAAAPRVGITGLGVSQGKETSDAVIAGNLITGFSTGIDVRGKSVLVTNNKISNFENTGILVYQSSDVKVDGNQIQNGLSETRRSIGLRAVLSDDIAFLNNCLIQVVDGVNVSGGNMIIKDNLLRKFSRGIWIAQGNAVIEGNTLNPDAFEAVPESYSVSVTNNAGAIIKNNTFKEFKNYPIYCSTSAKTSIIGNHLERSPLLVTIYISAGVHEIFDNTISVNRTAGNPIVIYLNGSAGSIISGNTINNLSAGTATAIQTNTSTNSKIIGNRIFKGTINKHSSDTIDGNMIV.

PbH1 repeat units follow at residues 100 to 128, 139 to 161, 173 to 195, 196 to 225, 236 to 266, 313 to 333, 334 to 356, 357 to 382, 406 to 427, 456 to 478, and 529 to 554; these read QENI…RSTH, CSNV…IVSP, SEQI…SITG, CDMV…DIEG, PINV…LIEG, TSDA…IDVR, GKSV…LVYQ, SSDV…GLRA, GGNM…WIAQ, NAGA…YCST, and SAGS…QTNT.

This is an uncharacterized protein from Bacillus subtilis (strain 168).